Here is a 450-residue protein sequence, read N- to C-terminus: Glucose-6-phosphate isomerase (450 aa).

The residue at position 39 (Thr-39) is a Phosphothreonine. The Proton donor role is filled by Glu-291. Active-site residues include His-312 and Lys-426.

Belongs to the GPI family.

Its subcellular location is the cytoplasm. It catalyses the reaction alpha-D-glucose 6-phosphate = beta-D-fructose 6-phosphate. It participates in carbohydrate biosynthesis; gluconeogenesis. The protein operates within carbohydrate degradation; glycolysis; D-glyceraldehyde 3-phosphate and glycerone phosphate from D-glucose: step 2/4. Catalyzes the reversible isomerization of glucose-6-phosphate to fructose-6-phosphate. The protein is Glucose-6-phosphate isomerase of Bacillus cereus (strain ATCC 10987 / NRS 248).